The chain runs to 210 residues: Oligoribonuclease (210 aa).

In terms of domain architecture, Exonuclease spans 12 to 177; that stretch reads LVWIDLEMTG…ADIVESIREL (166 aa). Y134 is an active-site residue.

Belongs to the oligoribonuclease family.

The protein resides in the cytoplasm. In terms of biological role, 3'-to-5' exoribonuclease specific for small oligoribonucleotides. This Corynebacterium diphtheriae (strain ATCC 700971 / NCTC 13129 / Biotype gravis) protein is Oligoribonuclease.